The primary structure comprises 402 residues: Proline-rich protein 25 (402 aa).

Disordered regions lie at residues 1 to 29, 109 to 255, and 337 to 371; these read MARTDQKPPCRGGCWGQPGHPNTGGAAAH, TVPG…MVGS, and EAAQDPATRRTAPPRRTASPEPPAPGAPLPACPGR. A compositionally biased stretch (low complexity) spans 345–355; the sequence is RRTAPPRRTAS. Pro residues predominate over residues 356–367; the sequence is PEPPAPGAPLPA.

The protein is Proline-rich protein 25 (PRR25) of Homo sapiens (Human).